Here is a 127-residue protein sequence, read N- to C-terminus: Major sperm protein 78 (127 aa).

An N-acetylalanine modification is found at alanine 2. The MSP domain maps to 9–126 (DIQTQPGTKI…RRKNLPIEYN (118 aa)).

Sperm.

The protein resides in the cell projection. It localises to the pseudopodium. It is found in the cytoplasm. Its subcellular location is the cytoskeleton. Central component in molecular interactions underlying sperm crawling. Forms an extensive filament system that extends from sperm villipoda, along the leading edge of the pseudopod. The polypeptide is Major sperm protein 78 (msp-78) (Caenorhabditis elegans).